Here is a 623-residue protein sequence, read N- to C-terminus: Heterogeneous nuclear ribonucleoprotein Q (623 aa).

An N-acetylalanine modification is found at Ala-2. Position 159 is a phosphoserine (Ser-159). 3 consecutive RRM domains span residues 162–241 (TEIF…ISVA), 243–325 (NRLF…WADP), and 338–408 (KVLF…FAKP). A Glycyl lysine isopeptide (Lys-Gly) (interchain with G-Cter in SUMO2) cross-link involves residue Lys-168. An N6-acetyllysine modification is found at Lys-221. An N6-acetyllysine modification is found at Lys-363. Tyr-373 is modified (phosphotyrosine). The interaction with APOBEC1 stretch occupies residues 400 to 561 (NIEIVFAKPP…GARGGRGGNV (162 aa)). Arg-444 is subject to Asymmetric dimethylarginine; by PRMT1; alternate. Arg-444 is subject to Omega-N-methylarginine; by PRMT1; alternate. A run of 6 repeats spans residues 448-450 (RGG), 451-453 (RGG), 460-464 (YYGYE), 469-472 (YYGY), 478-480 (RGG), and 485-488 (YYGY). The interval 448–559 (RGGRGGYGYP…VRGARGGRGG (112 aa)) is 8 X 3 AA repeats of R-G-G. Residues 460-488 (YYGYEDYYDYYGYDYHNYRGGYEDPYYGY) form a 3 X 4 AA repeats of Y-Y-G-Y region. At Arg-496 the chain carries Omega-N-methylarginine; by PRMT1. Residues 497 to 623 (GRGGRGARGA…YQDTFGQQWK (127 aa)) are disordered. Residues 498 to 500 (RGG) form a 1-4 repeat. The span at 504 to 522 (RGAAPSRGRGAAPPRGRAG) shows a compositional bias: low complexity. Arg-510 bears the Asymmetric dimethylarginine; by PRMT1 mark. Arg-518 carries the asymmetric dimethylarginine; by PRMT1; alternate modification. Arg-518 bears the Omega-N-methylarginine; by PRMT1; alternate mark. Residues 518–549 (RGRAGYSQRGGPGSARGVRGARGGAQQQRGRG) are interaction with SMN. An Asymmetric dimethylarginine; alternate modification is found at Arg-526. Arg-526 is modified (omega-N-methylarginine; alternate). One copy of the 1-5 repeat lies at 526–528 (RGG). Asymmetric dimethylarginine; by PRMT1; alternate occurs at positions 536 and 539. An omega-N-methylarginine; by PRMT1; alternate mark is found at Arg-536 and Arg-539. A run of 3 repeats spans residues 539–541 (RGG), 554–556 (RGG), and 557–559 (RGG). Positions 550–562 (VRGARGGRGGNVG) are enriched in gly residues. The Bipartite nuclear localization signal motif lies at 564 to 578 (KRKADGYNQPDTKRR). A compositionally biased stretch (polar residues) spans 580–595 (TNNQNWGSQPIAQQPL). Phosphoserine is present on Ser-587. Lys-607 participates in a covalent cross-link: Glycyl lysine isopeptide (Lys-Gly) (interchain with G-Cter in SUMO2). Over residues 611-623 (QEFYQDTFGQQWK) the composition is skewed to polar residues.

In terms of assembly, identified in the spliceosome C complex. Component of the coding region determinant (CRD)-mediated complex, composed of DHX9, HNRNPU, IGF2BP1, SYNCRIP and YBX1. Identified in a mRNP complex, at least composed of DHX9, DDX3X, ELAVL1, HNRNPU, IGF2BP1, ILF3, PABPC1, PCBP2, PTBP2, STAU1, STAU2, SYNCRIP and YBX1. Identified in a mRNP granule complex, at least composed of ACTB, ACTN4, DHX9, ERG, HNRNPA1, HNRNPA2B1, HNRNPAB, HNRNPD, HNRNPL, HNRNPR, HNRNPU, HSPA1, HSPA8, IGF2BP1, ILF2, ILF3, NCBP1, NCL, PABPC1, PABPC4, PABPN1, RPLP0, RPS3, RPS3A, RPS4X, RPS8, RPS9, SYNCRIP, YBX1 and untranslated mRNAs. Interacts with GTPBP1. Isoform 1 is a component of the APOB mRNA editosome complex. Isoform 1 interacts with APOBEC1 and A1CF. Part of a complex associated with the FOS mCRD domain and consisting of PABPC1, PAIP1, CSDE1/UNR, HNRPD and SYNCRIP. Isoform 2 interacts with HNRPR. Interacts with POLR2A hyperphosphorylated C-terminal domain. Interacts with HABP4. Identified in a histone pre-mRNA complex, at least composed of ERI1, LSM11, SLBP, SNRPB, SYNCRIP and YBX1. Isoform 1 and isoform 2 interact with SMN. Isoform 2 interacts through its C-terminal domain with SYT7, SYT8 and SYT9. The non-phosphorylated and phosphorylated forms are colocalized with PAIP1 in polysomes. In terms of processing, phosphorylated on tyrosine. The membrane-bound form found in microsomes is phosphorylated in vitro by insulin receptor tyrosine kinase (INSR). Phosphorylation is inhibited upon binding to RNA, whereas the cytoplasmic form is poorly phosphorylated. Ubiquitous. Detected in heart, brain, spleen, lung, liver, skeletal muscle, adipocytes, kidney and testis.

It is found in the nucleus. The protein localises to the nucleoplasm. It localises to the microsome. Its subcellular location is the cytoplasm. Heterogeneous nuclear ribonucleoprotein (hnRNP) implicated in mRNA processing mechanisms. Component of the CRD-mediated complex that promotes MYC mRNA stability. Isoform 1 and isoform 2 are associated in vitro with pre-mRNA, splicing intermediates and mature mRNA protein complexes. Isoform 1 binds to apoB mRNA AU-rich sequences. Isoform 1 is part of the APOB mRNA editosome complex and may modulate the postranscriptional C to U RNA-editing of the APOB mRNA through either by binding to A1CF (APOBEC1 complementation factor), to APOBEC1 or to RNA itself. May be involved in translationally coupled mRNA turnover. Implicated with other RNA-binding proteins in the cytoplasmic deadenylation/translational and decay interplay of the FOS mRNA mediated by the major coding-region determinant of instability (mCRD) domain. Interacts in vitro preferentially with poly(A) and poly(U) RNA sequences. Isoform 2 may be involved in cytoplasmic vesicle-based mRNA transport through interaction with synaptotagmins. In Mus musculus (Mouse), this protein is Heterogeneous nuclear ribonucleoprotein Q (Syncrip).